We begin with the raw amino-acid sequence, 500 residues long: Probable cytosol aminopeptidase (500 aa).

Residues Lys265 and Asp270 each contribute to the Mn(2+) site. Lys277 is an active-site residue. Mn(2+) contacts are provided by Asp288, Asp347, and Glu349. Residue Arg351 is part of the active site.

It belongs to the peptidase M17 family. Mn(2+) serves as cofactor.

The protein localises to the cytoplasm. It catalyses the reaction Release of an N-terminal amino acid, Xaa-|-Yaa-, in which Xaa is preferably Leu, but may be other amino acids including Pro although not Arg or Lys, and Yaa may be Pro. Amino acid amides and methyl esters are also readily hydrolyzed, but rates on arylamides are exceedingly low.. The enzyme catalyses Release of an N-terminal amino acid, preferentially leucine, but not glutamic or aspartic acids.. In terms of biological role, presumably involved in the processing and regular turnover of intracellular proteins. Catalyzes the removal of unsubstituted N-terminal amino acids from various peptides. The sequence is that of Probable cytosol aminopeptidase from Rickettsia rickettsii (strain Iowa).